The primary structure comprises 265 residues: Secreted RxLR effector protein 16 (265 aa).

A signal peptide spans 1–19; it reads MRGAFYIAIALLIVRSRTA. Positions 46–61 match the RxLR-dEER motif; sequence RYLRGGLALSATNEER. N-linked (GlcNAc...) asparagine glycans are attached at residues asparagine 170, asparagine 219, and asparagine 240.

It belongs to the RxLR effector family. In terms of processing, N-glycosylated. The putative N-glycosylation site at position 240 is essential for cell death-inducing activity.

Its subcellular location is the secreted. It localises to the host nucleus. Effector that acts as an elicitor that induces cell death and promotes ROS accumulation in Nicotian benthamiana. RxLR16-triggered cell death is dependent on SGT1, HSP90 and RAR1, but independent of the somatic embryogenesis receptor-like kinase SERK3/BAK1, indicating that it acts independently of the detection of cell surface pattern recognition receptors. Enhances the expressional levels of defense-associated genes involved in the salicylic acid-, jasmonate acid-, and ethylene-mediated signal transduction, resulting in disease resistance. However, as some other Plasmopara viticola RxLR effectors including RxLR1, RxLR10, RxLR30 and RxLR25, can suppress defense responses and disease resistance induced by RxLR16, it may not trigger host cell death or immune responses during physiological infection under natural conditions. The chain is Secreted RxLR effector protein 16 from Plasmopara viticola (Downy mildew of grapevine).